We begin with the raw amino-acid sequence, 546 residues long: Glucose-6-phosphate isomerase (546 aa).

The active-site Proton donor is the glutamate 353. Residues histidine 384 and lysine 512 contribute to the active site.

It belongs to the GPI family.

The protein resides in the cytoplasm. The enzyme catalyses alpha-D-glucose 6-phosphate = beta-D-fructose 6-phosphate. It participates in carbohydrate biosynthesis; gluconeogenesis. The protein operates within carbohydrate degradation; glycolysis; D-glyceraldehyde 3-phosphate and glycerone phosphate from D-glucose: step 2/4. Its function is as follows. Catalyzes the reversible isomerization of glucose-6-phosphate to fructose-6-phosphate. This Methylococcus capsulatus (strain ATCC 33009 / NCIMB 11132 / Bath) protein is Glucose-6-phosphate isomerase.